The primary structure comprises 469 residues: Interstitial collagenase (469 aa).

The N-terminal stretch at 1 to 18 (MPRLPLLLLLLWGTGSHG) is a signal peptide. Residues 19-99 (FPAATSETQE…PRCGVPDVAP (81 aa)) constitute a propeptide, activation peptide. Positions 90 to 97 (PRCGVPDV) match the Cysteine switch motif. Zn(2+) is bound at residue cysteine 92. Asparagine 120 is a glycosylation site (N-linked (GlcNAc...) asparagine). The Ca(2+) site is built by aspartate 124 and aspartate 158. Zn(2+) contacts are provided by histidine 168 and aspartate 170. Ca(2+) contacts are provided by aspartate 175, glycine 176, glycine 178, and asparagine 180. Position 183 (histidine 183) interacts with Zn(2+). 3 residues coordinate Ca(2+): glycine 190, glycine 192, and aspartate 194. Histidine 196 lines the Zn(2+) pocket. 3 residues coordinate Ca(2+): aspartate 198, aspartate 199, and glutamate 201. Position 218 (histidine 218) interacts with Zn(2+). The active site involves glutamate 219. Zn(2+) is bound by residues histidine 222 and histidine 228. Threonine 274 carries the phosphothreonine modification. Hemopexin repeat units lie at residues 275-324 (PEVC…WPQL), 325-371 (PNGL…FGFP), 374-422 (VKSI…FPGI), and 423-466 (GNKV…WFNC). Cysteine 278 and cysteine 466 are joined by a disulfide. Ca(2+) is bound by residues aspartate 285 and glutamine 329. A Phosphotyrosine; by PKDCC modification is found at tyrosine 360. 2 residues coordinate Ca(2+): aspartate 378 and aspartate 427.

This sequence belongs to the peptidase M10A family. The cofactor is Ca(2+). Requires Zn(2+) as cofactor. Tyrosine phosphorylated in platelets by PKDCC/VLK.

It is found in the secreted. It localises to the extracellular space. The protein localises to the extracellular matrix. It carries out the reaction Cleavage of the triple helix of collagen at about three-quarters of the length of the molecule from the N-terminus, at 775-Gly-|-Ile-776 in the alpha1(I) chain. Cleaves synthetic substrates and alpha-macroglobulins at bonds where P1' is a hydrophobic residue.. Its activity is regulated as follows. Can be activated without removal of the activation peptide. Functionally, cleaves collagens of types I, II, and III at one site in the helical domain. Also cleaves collagens of types VII and X. The protein is Interstitial collagenase (MMP1) of Bos taurus (Bovine).